Here is a 698-residue protein sequence, read N- to C-terminus: Potassium-transporting ATPase ATP-binding subunit (698 aa).

The next 4 helical transmembrane spans lie at 56 to 76 (IMFV…VPSL), 82 to 102 (LWFN…ANFA), 240 to 260 (TVLI…PLFT), and 271 to 291 (ILVA…LSAI). D324 functions as the 4-aspartylphosphate intermediate in the catalytic mechanism. ATP-binding positions include D361, E365, 393 to 400 (FKAETRMS), and K412. Residues D535 and D539 each contribute to the Mg(2+) site. Transmembrane regions (helical) follow at residues 605–625 (FAII…LNIM), 633–653 (AILS…PLAM), and 677–697 (GGVL…GLFI).

This sequence belongs to the cation transport ATPase (P-type) (TC 3.A.3) family. Type IA subfamily. In terms of assembly, the system is composed of three essential subunits: KdpA, KdpB and KdpC.

The protein resides in the cell membrane. It carries out the reaction K(+)(out) + ATP + H2O = K(+)(in) + ADP + phosphate + H(+). In terms of biological role, part of the high-affinity ATP-driven potassium transport (or Kdp) system, which catalyzes the hydrolysis of ATP coupled with the electrogenic transport of potassium into the cytoplasm. This subunit is responsible for energy coupling to the transport system and for the release of the potassium ions to the cytoplasm. The polypeptide is Potassium-transporting ATPase ATP-binding subunit (Bacillus cytotoxicus (strain DSM 22905 / CIP 110041 / 391-98 / NVH 391-98)).